The sequence spans 400 residues: Argininosuccinate synthase (400 aa).

10-18 (AFSGGLDTT) provides a ligand contact to ATP. Y87 contacts L-citrulline. Position 117 (G117) interacts with ATP. L-aspartate-binding residues include T119, N123, and D124. N123 is an L-citrulline binding site. Residues R127, S173, S182, E255, and Y267 each contribute to the L-citrulline site.

It belongs to the argininosuccinate synthase family. Type 1 subfamily. Homotetramer.

Its subcellular location is the cytoplasm. It catalyses the reaction L-citrulline + L-aspartate + ATP = 2-(N(omega)-L-arginino)succinate + AMP + diphosphate + H(+). The protein operates within amino-acid biosynthesis; L-arginine biosynthesis; L-arginine from L-ornithine and carbamoyl phosphate: step 2/3. The sequence is that of Argininosuccinate synthase from Natronomonas pharaonis (strain ATCC 35678 / DSM 2160 / CIP 103997 / JCM 8858 / NBRC 14720 / NCIMB 2260 / Gabara) (Halobacterium pharaonis).